The sequence spans 266 residues: Chymotrypsin-like elastase family member 1 (266 aa).

Positions 1-16 are cleaved as a signal peptide; that stretch reads MLRFLVLATLVLYGHS. Positions 17–26 are cleaved as a propeptide — activation peptide; the sequence is TRDFPETNAR. A Peptidase S1 domain is found at 27 to 264; it reads VVGGTEARKN…YISWINNVIA (238 aa). A disulfide bond links cysteine 56 and cysteine 72. The active-site Charge relay system is the histidine 71. 4 residues coordinate Ca(2+): glutamate 85, asparagine 87, glutamine 90, and glutamate 95. A glycan (N-linked (GlcNAc...) asparagine) is linked at asparagine 87. Aspartate 119 functions as the Charge relay system in the catalytic mechanism. Intrachain disulfides connect cysteine 153–cysteine 220, cysteine 184–cysteine 200, and cysteine 210–cysteine 240. The active-site Charge relay system is serine 214. Asparagine 241 carries N-linked (GlcNAc...) asparagine glycosylation.

This sequence belongs to the peptidase S1 family. Elastase subfamily. Ca(2+) is required as a cofactor.

The protein resides in the secreted. The enzyme catalyses Hydrolysis of proteins, including elastin. Preferential cleavage: Ala-|-Xaa.. Functionally, serine proteases that hydrolyze many proteins in addition to elastin. In Felis catus (Cat), this protein is Chymotrypsin-like elastase family member 1 (CELA1).